The chain runs to 33 residues: Cytochrome b6-f complex subunit 8 (33 aa).

A helical transmembrane segment spans residues L2–V22.

This sequence belongs to the PetN family. As to quaternary structure, the 4 large subunits of the cytochrome b6-f complex are cytochrome b6, subunit IV (17 kDa polypeptide, PetD), cytochrome f and the Rieske protein, while the 4 small subunits are PetG, PetL, PetM and PetN. The complex functions as a dimer.

Its subcellular location is the plastid. The protein resides in the organellar chromatophore thylakoid membrane. Component of the cytochrome b6-f complex, which mediates electron transfer between photosystem II (PSII) and photosystem I (PSI), cyclic electron flow around PSI, and state transitions. This Paulinella chromatophora protein is Cytochrome b6-f complex subunit 8.